A 1218-amino-acid chain; its full sequence is DNA-directed RNA polymerase subunit beta' (1218 aa).

Cys-60, Cys-62, Cys-75, and Cys-78 together coordinate Zn(2+). 3 residues coordinate Mg(2+): Asp-455, Asp-457, and Asp-459. Zn(2+) contacts are provided by Cys-824, Cys-897, Cys-904, and Cys-907. The tract at residues 1195–1218 is disordered; that stretch reads ENEAQSDKSQDEQEIGEITVDMGE.

Belongs to the RNA polymerase beta' chain family. In terms of assembly, the RNAP catalytic core consists of 2 alpha, 1 beta, 1 beta' and 1 omega subunit. When a sigma factor is associated with the core the holoenzyme is formed, which can initiate transcription. The cofactor is Mg(2+). Zn(2+) serves as cofactor.

It catalyses the reaction RNA(n) + a ribonucleoside 5'-triphosphate = RNA(n+1) + diphosphate. In terms of biological role, DNA-dependent RNA polymerase catalyzes the transcription of DNA into RNA using the four ribonucleoside triphosphates as substrates. The protein is DNA-directed RNA polymerase subunit beta' of Natranaerobius thermophilus (strain ATCC BAA-1301 / DSM 18059 / JW/NM-WN-LF).